The chain runs to 319 residues: tRNA uridine(34) hydroxylase (319 aa).

The Rhodanese domain maps to 127 to 221; it reads KQEDTVIIDA…YGKDPEVQGE (95 aa). The Cysteine persulfide intermediate role is filled by C181.

The protein belongs to the TrhO family.

It carries out the reaction uridine(34) in tRNA + AH2 + O2 = 5-hydroxyuridine(34) in tRNA + A + H2O. Its function is as follows. Catalyzes oxygen-dependent 5-hydroxyuridine (ho5U) modification at position 34 in tRNAs. This chain is tRNA uridine(34) hydroxylase, found in Bacillus cereus (strain ATCC 10987 / NRS 248).